Here is a 131-residue protein sequence, read N- to C-terminus: Interleukin-13 (131 aa).

Residues 1–18 (MALWLTLVIALTCFGGLA) form the signal peptide. 4 N-linked (GlcNAc...) asparagine glycosylation sites follow: Asn-39, Asn-50, Asn-58, and Asn-74. 2 cysteine pairs are disulfide-bonded: Cys-49–Cys-78 and Cys-66–Cys-92.

Belongs to the IL-4/IL-13 family. As to quaternary structure, interacts with IL13RA2.

It localises to the secreted. In terms of biological role, cytokine that plays important roles in allergic inflammation and immune response to parasite infection. Synergizes with IL2 in regulating interferon-gamma synthesis. Stimulates B-cell proliferation, and activation of eosinophils, basophils, and mast cells. Plays an important role in controlling IL33 activity by modulating the production of transmembrane and soluble forms of interleukin-1 receptor-like 1/IL1RL1. Displays the capacity to antagonize Th1-driven proinflammatory immune response and downregulates synthesis of many proinflammatory cytokines including IL1, IL6, IL10, IL12 and TNF-alpha through a mechanism that partially involves suppression of NF-kappa-B. Also functions on nonhematopoietic cells, including endothelial cells where it induces vascular cell adhesion protein 1/VCAM1, which is important in the recruitment of eosinophils. Exerts its biological effects through its receptors which comprises the IL4R chain and the IL13RA1 chain, to activate JAK1 and TYK2, leading to the activation of STAT6. Aside from IL13RA1, another receptor IL13RA2 acts as a high affinity decoy for IL13 and mediates internalization and depletion of extracellular IL13. This Sus scrofa (Pig) protein is Interleukin-13 (IL13).